The sequence spans 1058 residues: Outer capsid protein VP4 (1058 aa).

This sequence belongs to the orthoreovirus lambda-2 protein family.

The protein localises to the virion. The catalysed reaction is a 5'-end diphospho-ribonucleoside in mRNA + GTP + H(+) = a 5'-end (5'-triphosphoguanosine)-ribonucleoside in mRNA + diphosphate. It carries out the reaction a 5'-end (5'-triphosphoguanosine)-ribonucleoside in mRNA + S-adenosyl-L-methionine = a 5'-end (N(7)-methyl 5'-triphosphoguanosine)-ribonucleoside in mRNA + S-adenosyl-L-homocysteine. Its function is as follows. Outer capsid protein involved in mRNA capping. Catalyzes the last 3 enzymatic activities for formation of the 5' cap structure on the viral plus-strand transcripts, namely the RNA guanylyltransferase, RNA-7N- and RNA-2'O-methyltransferase activities. The sequence is that of Outer capsid protein VP4 (S4) from Lymantria dispar cypovirus 1 (isolate Rao) (LdCPV-1).